Reading from the N-terminus, the 626-residue chain is Probable potassium transport system protein Kup (626 aa).

The next 12 helical transmembrane spans lie at 11-31 (FLTL…TSPL), 55-75 (LSLI…VFVM), 103-123 (AWII…GMIT), 140-160 (AALS…LFLI), 171-191 (LFGP…FVSL), 216-236 (LGFA…ALYA), 250-270 (WFAV…ALLI), 282-302 (LLVP…ATVI), 340-360 (IYAP…VLAF), 369-389 (AYGL…LVVA), 395-415 (WPGL…LSFL), and 422-442 (LGDG…VMST).

The protein belongs to the HAK/KUP transporter (TC 2.A.72) family.

Its subcellular location is the cell inner membrane. It carries out the reaction K(+)(in) + H(+)(in) = K(+)(out) + H(+)(out). Its function is as follows. Transport of potassium into the cell. Likely operates as a K(+):H(+) symporter. This is Probable potassium transport system protein Kup from Methylococcus capsulatus (strain ATCC 33009 / NCIMB 11132 / Bath).